Consider the following 274-residue polypeptide: Large ribosomal subunit protein uL2 (274 aa).

Disordered regions lie at residues 38 to 57 and 224 to 256; these read KRTG…VGGG and AMNP…KGYK. Positions 229–239 are enriched in basic and acidic residues; the sequence is DHPHGGGEGRN.

Belongs to the universal ribosomal protein uL2 family. In terms of assembly, part of the 50S ribosomal subunit. Forms a bridge to the 30S subunit in the 70S ribosome.

Functionally, one of the primary rRNA binding proteins. Required for association of the 30S and 50S subunits to form the 70S ribosome, for tRNA binding and peptide bond formation. It has been suggested to have peptidyltransferase activity; this is somewhat controversial. Makes several contacts with the 16S rRNA in the 70S ribosome. The polypeptide is Large ribosomal subunit protein uL2 (Acinetobacter baumannii (strain AB307-0294)).